The chain runs to 259 residues: Haloacid dehalogenase-like hydrolase domain-containing protein 2 (259 aa).

Positions 13 and 15 each coordinate Mg(2+). Residues 13–15 (DLS) and 46–47 (TN) contribute to the substrate site. Residues 49–71 (TKESKRDLLERLRKLEFDISEEE) are a coiled coil. K50 carries the post-translational modification N6-succinyllysine. K179 provides a ligand contact to substrate. D204 provides a ligand contact to Mg(2+).

This sequence belongs to the HAD-like hydrolase superfamily. Mg(2+) is required as a cofactor.

In Rattus norvegicus (Rat), this protein is Haloacid dehalogenase-like hydrolase domain-containing protein 2 (Hdhd2).